An 840-amino-acid chain; its full sequence is Wings apart-like protein 2 (840 aa).

Disordered stretches follow at residues 1–37 (MMER…EPVD), 56–78 (SDND…FGSN), and 532–594 (FDLE…DHHV). The span at 546 to 557 (KQKKSKGQKRKG) shows a compositional bias: basic residues. The segment covering 558–567 (SYRDKKDERS) has biased composition (basic and acidic residues). Residues 569 to 585 (QLFSSQEESNHGLNSQE) are compositionally biased toward polar residues. Residues 764–819 (KEAEKMIVEAYSALLLAFLSTESRSIRNAIRDYLPKRDMAILVPVLDRFVAFHTTL) enclose the WAPL domain.

This sequence belongs to the WAPL family. Interacts with the cohesin complex throughout the cell cycle. Expressed in roots, leaves, buds and siliques.

Its subcellular location is the nucleus. It localises to the chromosome. Its function is as follows. Regulator of sister chromatid cohesion in meiosis which negatively regulates cohesin association with chromatin, acting as an antagonist of CTF7. Cohesion ensures that chromosome partitioning is accurate in both meiotic and mitotic cells and plays an important role in DNA repair. Essential for the prophase removal of cohesin during meiosis thus determining the timely release of meiotic cohesion. Important for proper spindle attachment and assembly during meiosis. Helps to prevent abnormal centromere association during prophase I in meiocytes. Required for early embryonic patterning. Also involved in chromosome segregation during mitosis. The protein is Wings apart-like protein 2 of Arabidopsis thaliana (Mouse-ear cress).